The following is a 470-amino-acid chain: Putative bifunctional phosphatase/peptidyl-prolyl cis-trans isomerase (470 aa).

Residue Asp-22 is the Nucleophile of the active site. The Mg(2+) site is built by Asp-22, Asp-24, and Asp-221. The 183-residue stretch at 286–468 (TGPKVTIKTN…EDVIIETIEV (183 aa)) folds into the PPIase cyclophilin-type domain.

This sequence in the C-terminal section; belongs to the cyclophilin-type PPIase family. PPIL1 subfamily. It depends on Mg(2+) as a cofactor.

It catalyses the reaction [protein]-peptidylproline (omega=180) = [protein]-peptidylproline (omega=0). Functionally, PPIases accelerate the folding of proteins. It catalyzes the cis-trans isomerization of proline imidic peptide bonds in oligopeptides. The polypeptide is Putative bifunctional phosphatase/peptidyl-prolyl cis-trans isomerase (Streptococcus pyogenes serotype M6 (strain ATCC BAA-946 / MGAS10394)).